We begin with the raw amino-acid sequence, 170 residues long: Myosin regulatory light chain 11 (170 aa).

A2 is subject to N,N,N-trimethylalanine. 2 positions are modified to phosphoserine: S16 and S17. 2 positions are modified to phosphothreonine: T26 and T36. In terms of domain architecture, EF-hand 1 spans T26–L61. Residues D39, N41, D43, and D50 each contribute to the Ca(2+) site. Residue S76 is modified to Phosphoserine. 2 EF-hand domains span residues D96 to R131 and F132 to K167. Phosphothreonine is present on T102.

Myosin is a hexamer of 2 heavy chains and 4 light chains. In terms of processing, n,N,N-trimethylalanine found in this myosin light chain would not have been detected in the N-terminal tryptic peptide in PubMed:863872 and PubMed:352892 because it would remain trimethylated and ninhydrin negative after hydrolysis.

Its function is as follows. Myosin regulatory subunit that plays an essential role to maintain muscle integrity during early development. Plays a role in muscle contraction. The protein is Myosin regulatory light chain 11 (MYL11) of Oryctolagus cuniculus (Rabbit).